Here is an 817-residue protein sequence, read N- to C-terminus: Leucine--tRNA ligase (817 aa).

Residues 42–52 carry the 'HIGH' region motif; the sequence is PYPSGKLHMGH. A 'KMSKS' region motif is present at residues 576-580; the sequence is KMSKS. Residue Lys-579 participates in ATP binding.

Belongs to the class-I aminoacyl-tRNA synthetase family.

The protein localises to the cytoplasm. It carries out the reaction tRNA(Leu) + L-leucine + ATP = L-leucyl-tRNA(Leu) + AMP + diphosphate. The protein is Leucine--tRNA ligase of Methylobacillus flagellatus (strain ATCC 51484 / DSM 6875 / VKM B-1610 / KT).